Reading from the N-terminus, the 119-residue chain is Protein TusC (119 aa).

The protein belongs to the DsrF/TusC family. As to quaternary structure, heterohexamer, formed by a dimer of trimers. The hexameric TusBCD complex contains 2 copies each of TusB, TusC and TusD. The TusBCD complex interacts with TusE.

The protein resides in the cytoplasm. Functionally, part of a sulfur-relay system required for 2-thiolation of 5-methylaminomethyl-2-thiouridine (mnm(5)s(2)U) at tRNA wobble positions. The sequence is that of Protein TusC from Buchnera aphidicola subsp. Acyrthosiphon pisum (strain 5A).